We begin with the raw amino-acid sequence, 452 residues long: Aspartyl/glutamyl-tRNA(Asn/Gln) amidotransferase subunit B (452 aa).

Belongs to the GatB/GatE family. GatB subfamily. Heterotrimer of A, B and C subunits.

It catalyses the reaction L-glutamyl-tRNA(Gln) + L-glutamine + ATP + H2O = L-glutaminyl-tRNA(Gln) + L-glutamate + ADP + phosphate + H(+). The enzyme catalyses L-aspartyl-tRNA(Asn) + L-glutamine + ATP + H2O = L-asparaginyl-tRNA(Asn) + L-glutamate + ADP + phosphate + 2 H(+). In terms of biological role, allows the formation of correctly charged Asn-tRNA(Asn) or Gln-tRNA(Gln) through the transamidation of misacylated Asp-tRNA(Asn) or Glu-tRNA(Gln) in organisms which lack either or both of asparaginyl-tRNA or glutaminyl-tRNA synthetases. The reaction takes place in the presence of glutamine and ATP through an activated phospho-Asp-tRNA(Asn) or phospho-Glu-tRNA(Gln). This chain is Aspartyl/glutamyl-tRNA(Asn/Gln) amidotransferase subunit B, found in Methanosphaera stadtmanae (strain ATCC 43021 / DSM 3091 / JCM 11832 / MCB-3).